Here is a 472-residue protein sequence, read N- to C-terminus: 6-phosphogluconate dehydrogenase, decarboxylating (472 aa).

NADP(+)-binding positions include 10–15 (GMAVMG), 33–35 (NRT), 74–76 (VQA), and asparagine 102. Substrate-binding positions include asparagine 102 and 128 to 130 (SGG). The active-site Proton acceptor is the lysine 184. Position 187 to 188 (187 to 188 (HN)) interacts with substrate. Glutamate 191 serves as the catalytic Proton donor. Substrate is bound by residues tyrosine 192, lysine 262, arginine 289, arginine 447, and histidine 453.

Belongs to the 6-phosphogluconate dehydrogenase family. In terms of assembly, homodimer.

The enzyme catalyses 6-phospho-D-gluconate + NADP(+) = D-ribulose 5-phosphate + CO2 + NADPH. The protein operates within carbohydrate degradation; pentose phosphate pathway; D-ribulose 5-phosphate from D-glucose 6-phosphate (oxidative stage): step 3/3. Functionally, catalyzes the oxidative decarboxylation of 6-phosphogluconate to ribulose 5-phosphate and CO(2), with concomitant reduction of NADP to NADPH. This chain is 6-phosphogluconate dehydrogenase, decarboxylating (gnd), found in Lactococcus lactis subsp. cremoris (strain MG1363).